Here is a 207-residue protein sequence, read N- to C-terminus: Small ribosomal subunit protein uS4 (207 aa).

Positions 31–52 (KAKFDSKPGQHGRTSGARTSDY) are disordered. One can recognise an S4 RNA-binding domain in the interval 97 to 157 (CRLDNVVYRM…DKSKKQARIV (61 aa)).

This sequence belongs to the universal ribosomal protein uS4 family. As to quaternary structure, part of the 30S ribosomal subunit. Contacts protein S5. The interaction surface between S4 and S5 is involved in control of translational fidelity.

Its function is as follows. One of the primary rRNA binding proteins, it binds directly to 16S rRNA where it nucleates assembly of the body of the 30S subunit. In terms of biological role, with S5 and S12 plays an important role in translational accuracy. This chain is Small ribosomal subunit protein uS4, found in Acidovorax sp. (strain JS42).